Here is a 169-residue protein sequence, read N- to C-terminus: S-ribosylhomocysteine lyase (169 aa).

Residues H54, H58, and C128 each contribute to the Fe cation site.

This sequence belongs to the LuxS family. In terms of assembly, homodimer. Requires Fe cation as cofactor.

It carries out the reaction S-(5-deoxy-D-ribos-5-yl)-L-homocysteine = (S)-4,5-dihydroxypentane-2,3-dione + L-homocysteine. Involved in the synthesis of autoinducer 2 (AI-2) which is secreted by bacteria and is used to communicate both the cell density and the metabolic potential of the environment. The regulation of gene expression in response to changes in cell density is called quorum sensing. Catalyzes the transformation of S-ribosylhomocysteine (RHC) to homocysteine (HC) and 4,5-dihydroxy-2,3-pentadione (DPD). This is S-ribosylhomocysteine lyase from Shewanella frigidimarina (strain NCIMB 400).